Consider the following 119-residue polypeptide: Ribonuclease P protein component (119 aa).

This sequence belongs to the RnpA family. In terms of assembly, consists of a catalytic RNA component (M1 or rnpB) and a protein subunit.

It carries out the reaction Endonucleolytic cleavage of RNA, removing 5'-extranucleotides from tRNA precursor.. In terms of biological role, RNaseP catalyzes the removal of the 5'-leader sequence from pre-tRNA to produce the mature 5'-terminus. It can also cleave other RNA substrates such as 4.5S RNA. The protein component plays an auxiliary but essential role in vivo by binding to the 5'-leader sequence and broadening the substrate specificity of the ribozyme. The sequence is that of Ribonuclease P protein component from Nitrosococcus oceani (strain ATCC 19707 / BCRC 17464 / JCM 30415 / NCIMB 11848 / C-107).